The sequence spans 382 residues: 3-phytase (382 aa).

The signal sequence occupies residues 1-26; the sequence is MKVPKTMLLSTAAGLLLSLTATSVSA. Positions 27-361 constitute a BPP domain; it reads HYVNEEHHFK…VSWEQIAQHL (335 aa).

The protein resides in the secreted. The enzyme catalyses 1D-myo-inositol hexakisphosphate + H2O = 1D-myo-inositol 1,2,4,5,6-pentakisphosphate + phosphate. In Bacillus subtilis (strain 168), this protein is 3-phytase (phy).